The following is a 107-amino-acid chain: Nucleoid-associated protein PPA0205 (107 aa).

Belongs to the YbaB/EbfC family. Homodimer.

Its subcellular location is the cytoplasm. It is found in the nucleoid. Functionally, binds to DNA and alters its conformation. May be involved in regulation of gene expression, nucleoid organization and DNA protection. This is Nucleoid-associated protein PPA0205 from Cutibacterium acnes (strain DSM 16379 / KPA171202) (Propionibacterium acnes).